The following is a 326-amino-acid chain: Thioredoxin reductase (326 aa).

Position 55 to 62 (55 to 62) interacts with FAD; that stretch reads EGPEPGGQ. An intrachain disulfide couples Cys156 to Cys159. 298–307 serves as a coordination point for FAD; it reads DVSNKLYAQA.

It belongs to the class-II pyridine nucleotide-disulfide oxidoreductase family. As to quaternary structure, homodimer. The cofactor is FAD.

It localises to the cytoplasm. The enzyme catalyses [thioredoxin]-dithiol + NADP(+) = [thioredoxin]-disulfide + NADPH + H(+). This chain is Thioredoxin reductase (trxB), found in Borreliella burgdorferi (strain ATCC 35210 / DSM 4680 / CIP 102532 / B31) (Borrelia burgdorferi).